Here is a 1066-residue protein sequence, read N- to C-terminus: UPF0182 protein BL1029 (1066 aa).

The tract at residues 12 to 74 is disordered; sequence GNGGDSRRNN…KPASGGSGGS (63 aa). Positions 44 to 61 are enriched in low complexity; the sequence is NAGPSGSSRPPRGPANPR. 7 consecutive transmembrane segments (helical) span residues 77–97, 126–146, 179–199, 235–255, 282–302, 326–346, and 372–392; these read SKIL…FFGL, LWVA…WLAI, VAVV…NANW, VLAA…VTHV, LGIW…IGVF, VTFI…IWLM, and VTSI…WPVL. The tract at residues 977 to 1044 is disordered; it reads DSGAAAGDAE…SQSAMKNGDW (68 aa). The span at 989–998 shows a compositional bias: polar residues; that stretch reads SGDQSGSDTN. Positions 1003–1016 are enriched in low complexity; it reads GTTDGKSDSGSSSD.

It belongs to the UPF0182 family.

The protein resides in the cell membrane. The sequence is that of UPF0182 protein BL1029 from Bifidobacterium longum (strain NCC 2705).